The sequence spans 358 residues: Myb family transcription factor APL (358 aa).

The HTH myb-type domain maps to 31–91; it reads TDPKPRLRWT…HLQKFRLGKQ (61 aa). The H-T-H motif DNA-binding region spans 62–87; the sequence is PKTIMRVMGVKGLTLYHLKSHLQKFR. Residues 125-145 adopt a coiled-coil conformation; the sequence is RNMNEMQMEVQRRLHEQLEVQ. The LHEQLE signature appears at 138-143; sequence LHEQLE. A disordered region spans residues 313 to 358; sequence RKSGLSGDEGNNGGKLLERPSPRRSPLSPMMNPNGGLIQGRNSPFG.

The protein belongs to the MYB-CC family. In terms of tissue distribution, expressed in shoots and roots, specifically in the developing protophloem sieve elements. Detected in phloem and/or cambium. Expressed in the phloem tissues of various organs, including leaves and cotyledons, during vegetative growth.

It localises to the nucleus. Transcription factor required for phloem identity. Has a dual role both in promoting phloem differentiation and in repressing xylem differentiation during vascular development. Regulates the expression of the transcription factor NAC045 (AC A4VCM0). May activate the transcription of specific genes involved in phosphate uptake or assimilation. Promotes flowering through transcriptional activation of both FT and its transport machinery component, FTIP1. In Arabidopsis thaliana (Mouse-ear cress), this protein is Myb family transcription factor APL.